Reading from the N-terminus, the 269-residue chain is uncharacterized protein (269 aa).

The 76-residue stretch at Phe14–Arg89 folds into the ACT domain.

This is an uncharacterized protein from Bacillus subtilis (strain 168).